We begin with the raw amino-acid sequence, 256 residues long: MTSVTMRQMLEAGVHFGHQTRYWNPKMAPFIFGARSNIHIINLEKTLPLFNDAMKYLEQVAANRGKILFVGTKKTMRKVIEEEARRCGMPYVNHRWLGGMLTNFKTIKASIARMKDLQAMRDDGRLNRFSKKEALGMMRELEKLVCNVGGIGDMDRLPDVMFIIDTGYEKNAVSEARKLGIPVVGVVDTNNSPVGIDYVIPGNDDSIRAVQLYAQSAATAILRGKASGVDFGAVADEFVEMEPETEQGATGETLGG.

It belongs to the universal ribosomal protein uS2 family.

This is Small ribosomal subunit protein uS2 from Methylococcus capsulatus (strain ATCC 33009 / NCIMB 11132 / Bath).